Reading from the N-terminus, the 268-residue chain is MTEQYQHRARKRFGQNFLHDAGVIDKILRAIRAKPEDRLLEIGPGQGALTEGLLNSGAQLDVVELDKDLIPILTGQFGNKPNFNLHQGDALKFDFNSLGAEPRSLRVVGNLPYNISTPLIFHLLQNASLIRDMHFMLQKEVVERMAAGPGGGDWGRLSIMVQYHCRVEHLFNVGPGAFNPPPKVDSAIVRLVPYETLPHPAKDHRVLERVVREAFNQRRKTLRNTLKLLLSSDEITASGVDGSLRPEQLDLAAFVRLADTLSEKVVTE.

6 residues coordinate S-adenosyl-L-methionine: asparagine 16, leucine 18, glycine 43, glutamate 64, aspartate 89, and asparagine 110.

This sequence belongs to the class I-like SAM-binding methyltransferase superfamily. rRNA adenine N(6)-methyltransferase family. RsmA subfamily.

The protein localises to the cytoplasm. It carries out the reaction adenosine(1518)/adenosine(1519) in 16S rRNA + 4 S-adenosyl-L-methionine = N(6)-dimethyladenosine(1518)/N(6)-dimethyladenosine(1519) in 16S rRNA + 4 S-adenosyl-L-homocysteine + 4 H(+). Specifically dimethylates two adjacent adenosines (A1518 and A1519) in the loop of a conserved hairpin near the 3'-end of 16S rRNA in the 30S particle. May play a critical role in biogenesis of 30S subunits. The polypeptide is Ribosomal RNA small subunit methyltransferase A (Pseudomonas savastanoi pv. phaseolicola (strain 1448A / Race 6) (Pseudomonas syringae pv. phaseolicola (strain 1448A / Race 6))).